A 310-amino-acid polypeptide reads, in one-letter code: 4-diphosphocytidyl-2-C-methyl-D-erythritol kinase (310 aa).

Residue K10 is part of the active site. 102 to 112 is a binding site for ATP; that stretch reads PVAGGMAGGSA. Residue D144 is part of the active site. The interval 289-310 is disordered; it reads TRTARGPAAGAQLLPGPVGSFA.

This sequence belongs to the GHMP kinase family. IspE subfamily.

It carries out the reaction 4-CDP-2-C-methyl-D-erythritol + ATP = 4-CDP-2-C-methyl-D-erythritol 2-phosphate + ADP + H(+). Its pathway is isoprenoid biosynthesis; isopentenyl diphosphate biosynthesis via DXP pathway; isopentenyl diphosphate from 1-deoxy-D-xylulose 5-phosphate: step 3/6. In terms of biological role, catalyzes the phosphorylation of the position 2 hydroxy group of 4-diphosphocytidyl-2C-methyl-D-erythritol. The sequence is that of 4-diphosphocytidyl-2-C-methyl-D-erythritol kinase from Cutibacterium acnes (strain DSM 16379 / KPA171202) (Propionibacterium acnes).